We begin with the raw amino-acid sequence, 245 residues long: 1-(5-phosphoribosyl)-5-[(5-phosphoribosylamino)methylideneamino] imidazole-4-carboxamide isomerase (245 aa).

Asp8 acts as the Proton acceptor in catalysis. The Proton donor role is filled by Asp131.

Belongs to the HisA/HisF family.

It localises to the cytoplasm. The enzyme catalyses 1-(5-phospho-beta-D-ribosyl)-5-[(5-phospho-beta-D-ribosylamino)methylideneamino]imidazole-4-carboxamide = 5-[(5-phospho-1-deoxy-D-ribulos-1-ylimino)methylamino]-1-(5-phospho-beta-D-ribosyl)imidazole-4-carboxamide. It participates in amino-acid biosynthesis; L-histidine biosynthesis; L-histidine from 5-phospho-alpha-D-ribose 1-diphosphate: step 4/9. The polypeptide is 1-(5-phosphoribosyl)-5-[(5-phosphoribosylamino)methylideneamino] imidazole-4-carboxamide isomerase (Neisseria meningitidis serogroup C (strain 053442)).